Here is a 198-residue protein sequence, read N- to C-terminus: uncharacterized protein (198 aa).

It localises to the plastid. The protein resides in the chloroplast. This is an uncharacterized protein from Antithamnion sp. (Red alga).